A 482-amino-acid chain; its full sequence is uncharacterized protein (482 aa).

The next 12 helical transmembrane spans lie at leucine 40 to leucine 57, alanine 83 to valine 103, histidine 109 to valine 129, leucine 140 to threonine 160, leucine 170 to glycine 190, tryptophan 205 to leucine 225, valine 278 to leucine 298, tyrosine 311 to serine 331, glycine 338 to threonine 358, valine 366 to isoleucine 386, alanine 399 to tyrosine 418, and glycine 428 to leucine 448.

The protein belongs to the major facilitator superfamily. Allantoate permease family.

The protein localises to the endoplasmic reticulum. It localises to the membrane. This is an uncharacterized protein from Schizosaccharomyces pombe (strain 972 / ATCC 24843) (Fission yeast).